The following is a 399-amino-acid chain: Phosphoglycerate kinase (399 aa).

Substrate is bound by residues 21–23, Arg36, 59–62, Arg120, and Arg158; these read DFN and HLGR. ATP-binding positions include Lys209, Gly297, Glu328, and 355–358; that span reads GGDS.

The protein belongs to the phosphoglycerate kinase family. In terms of assembly, monomer.

Its subcellular location is the cytoplasm. The enzyme catalyses (2R)-3-phosphoglycerate + ATP = (2R)-3-phospho-glyceroyl phosphate + ADP. It participates in carbohydrate degradation; glycolysis; pyruvate from D-glyceraldehyde 3-phosphate: step 2/5. The polypeptide is Phosphoglycerate kinase (Streptococcus thermophilus (strain CNRZ 1066)).